The following is a 299-amino-acid chain: MFSGLLIILVPLIVGYLIPLRQQAALKVINQLLSWMVYLILFFMGISLAFLDNLASNLLAILHYSAVSITVILLCNIAALMWLERGLPWRNHHQQEKLPSRIAMALESLKLCGVVVIGFAIGLSGLAFLQHATEASEYTLILLLFLVGIQLRNNGMTLKQIVLNRRGMIVAVVVVVSSLIGGLINAFILDLPINTALAMASGFGWYSLSGILLTESFGPVIGSAAFFNDLARELIAIMLIPGLIRRSRSTALGLCGATSMDFTLPVLQRTGGLDMVPAAIVHGFILSLLVPILIAFFSA.

Transmembrane regions (helical) follow at residues 1–21, 31–51, 58–78, 109–129, 131–151, 169–189, 207–227, and 277–297; these read MFSGLLIILVPLIVGYLIPLR, QLLSWMVYLILFFMGISLAFL, LLAILHYSAVSITVILLCNIA, LKLCGVVVIGFAIGLSGLAFL, HATEASEYTLILLLFLVGIQL, IVAVVVVVSSLIGGLINAFIL, SLSGILLTESFGPVIGSAAFF, and PAAIVHGFILSLLVPILIAFF.

Belongs to the LysO family.

The protein resides in the cell inner membrane. Functionally, mediates export of lysine. This Escherichia coli (strain K12) protein is Lysine exporter LysO.